We begin with the raw amino-acid sequence, 715 residues long: Methionine--tRNA ligase (715 aa).

A 'HIGH' region motif is present at residues 20-30; it reads PYANGKAHIGH. Residues Cys-151, Cys-154, Cys-163, and Cys-167 each contribute to the Zn(2+) site. The short motif at 334–338 is the 'KMSKS' region element; sequence KFSKT. ATP is bound at residue Lys-337. The disordered stretch occupies residues 559 to 593; sequence ANAKRNGVKGGEKEPSKSEGMGPSEASKASEKTVD. The 103-residue stretch at 613-715 folds into the tRNA-binding domain; sequence DFAKLDIRVG…KEIKSGSRIR (103 aa).

This sequence belongs to the class-I aminoacyl-tRNA synthetase family. MetG type 1 subfamily. In terms of assembly, homodimer. Zn(2+) is required as a cofactor.

Its subcellular location is the cytoplasm. The enzyme catalyses tRNA(Met) + L-methionine + ATP = L-methionyl-tRNA(Met) + AMP + diphosphate. In terms of biological role, is required not only for elongation of protein synthesis but also for the initiation of all mRNA translation through initiator tRNA(fMet) aminoacylation. The chain is Methionine--tRNA ligase from Methanosarcina mazei (strain ATCC BAA-159 / DSM 3647 / Goe1 / Go1 / JCM 11833 / OCM 88) (Methanosarcina frisia).